Consider the following 1032-residue polypeptide: Connector enhancer of kinase suppressor of ras 2 (1032 aa).

Residues 11–76 (WSPSQVVDWM…LEAVDLLCAL (66 aa)) form the SAM domain. At S12 the chain carries Phosphoserine. The CRIC domain occupies 84–178 (NLKTLSHKLN…TIVQQDCTVY (95 aa)). In terms of domain architecture, PDZ spans 215 to 297 (VIQLANIKPS…GVILTLKKRP (83 aa)). The span at 324–340 (RSPTSSVATPSSTISTP) shows a compositional bias: low complexity. The interval 324 to 349 (RSPTSSVATPSSTISTPTKRDSSALQ) is disordered. The DUF1170 domain maps to 332-515 (TPSSTISTPT…PTHYSLLPSL (184 aa)). 2 positions are modified to phosphoserine: S338 and S390. A disordered region spans residues 480–509 (EEYMFQRNSKKDTGKKSKKKGDKSTSPTHY). The 100-residue stretch at 570-669 (RGDCEGWLWK…WLNRINMLTA (100 aa)) folds into the PH domain. The interval 682–766 (DYWSESDKEE…PIRKTASQRR (85 aa)) is disordered. Y683 bears the Phosphotyrosine mark. The segment covering 683-693 (YWSESDKEEAD) has biased composition (acidic residues). Phosphoserine is present on residues S685 and S687. The segment covering 701 to 714 (DSPPPPYDTYPRPP) has biased composition (pro residues). Low complexity predominate over residues 730-740 (LSSTETSQSQS). A phosphoserine mark is found at S756 and S767. The tract at residues 866 to 900 (DPQDDIQPPEVEEEEEEEEEEAAGENIGEKNENRE) is disordered. A coiled-coil region spans residues 874–917 (PEVEEEEEEEEEEAAGENIGEKNENREEKLGDSLQDLYRALEEA). The segment covering 875 to 888 (EVEEEEEEEEEEAA) has biased composition (acidic residues). Position 906 is a phosphoserine (S906).

It belongs to the CNKSR family. In terms of assembly, interacts with RAF1, RAB2L and RAL GTPase proteins. Interacts with DLG4 and AIP1. Post-translationally, phosphorylated on tyrosine. In terms of tissue distribution, expressed in neurons and localized in the cell body and neurites.

It is found in the cytoplasm. The protein resides in the membrane. Functionally, may function as an adapter protein or regulator of Ras signaling pathways, in synaptic junctions. The protein is Connector enhancer of kinase suppressor of ras 2 (Cnksr2) of Rattus norvegicus (Rat).